The following is a 491-amino-acid chain: Polybrominated aromatic compounds synthase (491 aa).

Cys-437 provides a ligand contact to heme.

The protein belongs to the cytochrome P450 family. The cofactor is heme.

In terms of biological role, cytochrome P450 protein involved in the biosynthesis of polybrominated aromatic organic compounds. In the presence of ferredoxin, ferredoxin reductase and NADH, catalyzes the coupling of bromophenols and bromopyrroles, forming various polybrominated biphenyls and hydroxylated polybrominated diphenyl ethers (OH-BDE). Can also mediate the heterocoupling of 3,5-dibromocatechol. Can also use chlorinated phenolic substrates. 2,3,4-tribromopyrrole could be the physiological substrate. This chain is Polybrominated aromatic compounds synthase, found in Pseudoalteromonas luteoviolacea (strain 2ta16).